Consider the following 667-residue polypeptide: Soluble guanylate cyclase 89Da (667 aa).

Histidine 104 contributes to the heme binding site. The disordered stretch occupies residues 337-364 (AQEFSESHPVDDDESAREDEIDPATGER). Residues 347-358 (DDDESAREDEID) show a composition bias toward acidic residues. Positions 427 to 455 (QHCSKLEIMFEKEEQRSDELEKSLELADS) form a coiled coil. The region spanning 491–617 (SVIFLEVMNV…DTVNTASRME (127 aa)) is the Guanylate cyclase domain.

It belongs to the adenylyl cyclase class-4/guanylyl cyclase family. As to quaternary structure, heterodimer; with Gyc88E, in the presence of magnesium or manganese. Requires heme as cofactor.

It localises to the cytoplasm. The catalysed reaction is GTP = 3',5'-cyclic GMP + diphosphate. Probably not activated by nitric oxide (NO). Heterodimer also exhibits some stimulation, some compounds (SIN-1 and two of the NONOates) that were ineffective at stimulating Gyc-88E alone did stimulate the heterodimer. In terms of biological role, heterodimers with Gyc-89Da and Gyc-89Db are activated in response to changing oxygen concentrations, alerting flies to hypoxic environments. Under normal oxygen concentrations, oxygen binds to the heme group and results in low levels of guanylyl cyclase activity. When exposed to reduced oxygen concentrations, the oxygen dissociates from the heme group resulting in activation of the enzyme. The protein is Soluble guanylate cyclase 89Da of Drosophila melanogaster (Fruit fly).